The following is a 67-amino-acid chain: Large ribosomal subunit protein bL35 (67 aa).

The protein belongs to the bacterial ribosomal protein bL35 family.

The sequence is that of Large ribosomal subunit protein bL35 from Rhizorhabdus wittichii (strain DSM 6014 / CCUG 31198 / JCM 15750 / NBRC 105917 / EY 4224 / RW1) (Sphingomonas wittichii).